The chain runs to 87 residues: MSEEAKVQRAVIGRVVSDKMDKTRTILIERKVRHPLYGKYIRRSTKLHVHDEGNEARMGDKVMVQECRPMSKTKTFRLVKVLEKAAG.

Belongs to the universal ribosomal protein uS17 family. Part of the 30S ribosomal subunit.

One of the primary rRNA binding proteins, it binds specifically to the 5'-end of 16S ribosomal RNA. The protein is Small ribosomal subunit protein uS17 of Thioalkalivibrio sulfidiphilus (strain HL-EbGR7).